The following is a 27-amino-acid chain: Dermaseptin-S4 (27 aa).

This sequence belongs to the frog skin active peptide (FSAP) family. Dermaseptin subfamily. In terms of assembly, monomer and oligomer. Forms aggregates in aqueous environments. As to expression, expressed by the skin glands.

The protein localises to the secreted. Its function is as follows. Potent antimicrobial peptide with activity against bacteria and protozoa. Also has activity against fungi. Also shows activity against enveloped herpes simplex virus type 1. Probably acts by disturbing membrane functions with its amphipathic structure. Binds to healthy erythrocytes (this binding is receptor independent), and has strong hemolytic activity. Does not bind to P.falciparum infected erythrocytes, but accumulates within the parasite. Kills the parasite, and only at high concentrations has a hemolytic activity on the host cell. In vitro, shows high spermicidal activities. This Phyllomedusa sauvagei (Sauvage's leaf frog) protein is Dermaseptin-S4.